We begin with the raw amino-acid sequence, 127 residues long: Large ribosomal subunit protein uL22c (127 aa).

Belongs to the universal ribosomal protein uL22 family. Part of the 50S ribosomal subunit.

It localises to the plastid. Its subcellular location is the chloroplast. Its function is as follows. This protein binds specifically to 23S rRNA. In terms of biological role, the globular domain of the protein is located near the polypeptide exit tunnel on the outside of the subunit, while an extended beta-hairpin is found that lines the wall of the exit tunnel in the center of the 70S ribosome. This is Large ribosomal subunit protein uL22c (rpl22) from Acorus calamus var. americanus (American sweet flag).